The chain runs to 156 residues: Endoribonuclease YbeY (156 aa).

Zn(2+) contacts are provided by H114, H118, and H124.

This sequence belongs to the endoribonuclease YbeY family. Requires Zn(2+) as cofactor.

It is found in the cytoplasm. Single strand-specific metallo-endoribonuclease involved in late-stage 70S ribosome quality control and in maturation of the 3' terminus of the 16S rRNA. This chain is Endoribonuclease YbeY, found in Sodalis glossinidius (strain morsitans).